Here is a 354-residue protein sequence, read N- to C-terminus: UPF0283 membrane protein CGSHiGG_02710 (354 aa).

3 helical membrane-spanning segments follow: residues 57 to 77 (LLKFTALLFGLATVAQSVQWI), 87 to 107 (IYLAFALVSLIIILLGIKEII), and 211 to 231 (ESAVIVAISPLAVVDMFFIAW).

It belongs to the UPF0283 family.

The protein resides in the cell inner membrane. The polypeptide is UPF0283 membrane protein CGSHiGG_02710 (Haemophilus influenzae (strain PittGG)).